The primary structure comprises 262 residues: Ubiquitin thioesterase otubain-like (262 aa).

The OTU domain maps to 64 to 262 (KFIRRTRPDG…PGHYDILYPN (199 aa)). Residue Asp72 is part of the active site. The active-site Nucleophile is the Cys75. Ile168 contacts substrate. Residue His255 is part of the active site.

Belongs to the peptidase C65 family.

It carries out the reaction Thiol-dependent hydrolysis of ester, thioester, amide, peptide and isopeptide bonds formed by the C-terminal Gly of ubiquitin (a 76-residue protein attached to proteins as an intracellular targeting signal).. Functionally, possible hydrolase that can remove conjugated ubiquitin from proteins in vitro and may therefore play an important regulatory role at the level of protein turnover by preventing degradation. The chain is Ubiquitin thioesterase otubain-like from Drosophila melanogaster (Fruit fly).